The primary structure comprises 345 residues: Fructose-1,6-bisphosphatase class 1 (345 aa).

E90, D109, L111, and D112 together coordinate Mg(2+). Substrate contacts are provided by residues 112–115 and N199; that span reads DGSS. E271 serves as a coordination point for Mg(2+).

This sequence belongs to the FBPase class 1 family. As to quaternary structure, homotetramer. It depends on Mg(2+) as a cofactor.

It is found in the cytoplasm. The catalysed reaction is beta-D-fructose 1,6-bisphosphate + H2O = beta-D-fructose 6-phosphate + phosphate. It functions in the pathway carbohydrate biosynthesis; Calvin cycle. This Rhodopseudomonas palustris (strain BisB5) protein is Fructose-1,6-bisphosphatase class 1.